The chain runs to 658 residues: DNA mismatch repair protein MutL (658 aa).

Positions 114–130 (RQEDSSHATQVKAEDGK) are enriched in basic and acidic residues. Disordered regions lie at residues 114–137 (RQED…PTAA), 369–401 (DYPT…APQQ), and 438–457 (FGNM…LSDG).

It belongs to the DNA mismatch repair MutL/HexB family.

This protein is involved in the repair of mismatches in DNA. It is required for dam-dependent methyl-directed DNA mismatch repair. May act as a 'molecular matchmaker', a protein that promotes the formation of a stable complex between two or more DNA-binding proteins in an ATP-dependent manner without itself being part of a final effector complex. The sequence is that of DNA mismatch repair protein MutL from Neisseria meningitidis serogroup A / serotype 4A (strain DSM 15465 / Z2491).